Here is a 264-residue protein sequence, read N- to C-terminus: SPARC (264 aa).

The signal sequence occupies residues 1-16 (MRYALAACLLLLAASS). Residues 52–74 (PCEDHQCGWGKECVVGKKGEPTC) enclose the Follistatin-like domain. Cystine bridges form between Cys53/Cys64, Cys58/Cys74, Cys76/Cys110, Cys80/Cys103, Cys92/Cys135, Cys141/Cys228, and Cys236/Cys252. A Kazal-like domain is found at 68–137 (KKGEPTCECI…HLEYLGECKK (70 aa)). Residue Asn96 is glycosylated (N-linked (GlcNAc...) asparagine). An EF-hand domain is found at 224–259 (PMESCIKPFLEGCDANNDGNISIKEWGKCLGLKEGE). The Ca(2+) site is built by Asp237, Asn239, Asp241, Asn243, and Glu248. N-linked (GlcNAc...) asparagine glycosylation is present at Asn243.

It belongs to the SPARC family. In terms of tissue distribution, expressed by body wall and sex muscle cells. Probable association with basement membranes.

It is found in the secreted. It localises to the extracellular space. The protein resides in the extracellular matrix. Its subcellular location is the basement membrane. Its function is as follows. Has a high affinity for collagen. Affects nematode body morphology and mobility. Essential for C.elegans development and muscle function. The cysteine-rich region could have protease inhibitory activity or may provide the framework for a protein binding module. Probable role in skeletal morphogenesis. This is SPARC (ost-1) from Caenorhabditis elegans.